Here is a 179-residue protein sequence, read N- to C-terminus: MVKVANKYAKALFDVSLDTNNLETINEELTVINEAVKDKIEQLKMVDSNPTQTAEQRRELINGVFIDINPYIKNMMYVLADNRHISLIADVFKAFQSLYNGHYNQDFATIESTYELSQEELDKIVKLVTQQTKLSKVIVDTKINPDLIGGFRVKVGTTVLDGSVRNDLVQLQRKFRRVN.

It belongs to the ATPase delta chain family. As to quaternary structure, F-type ATPases have 2 components, F(1) - the catalytic core - and F(0) - the membrane proton channel. F(1) has five subunits: alpha(3), beta(3), gamma(1), delta(1), epsilon(1). F(0) has three main subunits: a(1), b(2) and c(10-14). The alpha and beta chains form an alternating ring which encloses part of the gamma chain. F(1) is attached to F(0) by a central stalk formed by the gamma and epsilon chains, while a peripheral stalk is formed by the delta and b chains.

It localises to the cell membrane. Functionally, f(1)F(0) ATP synthase produces ATP from ADP in the presence of a proton or sodium gradient. F-type ATPases consist of two structural domains, F(1) containing the extramembraneous catalytic core and F(0) containing the membrane proton channel, linked together by a central stalk and a peripheral stalk. During catalysis, ATP synthesis in the catalytic domain of F(1) is coupled via a rotary mechanism of the central stalk subunits to proton translocation. This protein is part of the stalk that links CF(0) to CF(1). It either transmits conformational changes from CF(0) to CF(1) or is implicated in proton conduction. This chain is ATP synthase subunit delta, found in Staphylococcus aureus (strain bovine RF122 / ET3-1).